The sequence spans 865 residues: Adenylate cyclase (865 aa).

Residues 1–540 (MYLYIETLKQ…DISSHFPIRL (540 aa)) are catalytic. The tract at residues 546–865 (KALYSPCEIR…FNDYQAVHHH (320 aa)) is regulatory.

Belongs to the adenylyl cyclase class-1 family.

It localises to the cytoplasm. It catalyses the reaction ATP = 3',5'-cyclic AMP + diphosphate. The chain is Adenylate cyclase (cya) from Proteus mirabilis.